We begin with the raw amino-acid sequence, 256 residues long: SPX domain-containing protein 1 (256 aa).

One can recognise an SPX domain in the interval methionine 1 to glutamine 155. Residues lysine 30–arginine 46 carry the Bipartite nuclear localization signal motif.

As to quaternary structure, interacts with PHR1 in a highly Pi-dependent manner.

It is found in the nucleus. Its function is as follows. Plays a positive role in plant adaptation to phosphate starvation. Inhibits PHR1 DNA-binding activity in a Pi-dependent manner. The polypeptide is SPX domain-containing protein 1 (Arabidopsis thaliana (Mouse-ear cress)).